A 484-amino-acid chain; its full sequence is Glutamyl-tRNA(Gln) amidotransferase subunit A (484 aa).

Catalysis depends on charge relay system residues K77 and S152. Catalysis depends on S176, which acts as the Acyl-ester intermediate.

The protein belongs to the amidase family. GatA subfamily. As to quaternary structure, heterotrimer of A, B and C subunits.

The enzyme catalyses L-glutamyl-tRNA(Gln) + L-glutamine + ATP + H2O = L-glutaminyl-tRNA(Gln) + L-glutamate + ADP + phosphate + H(+). In terms of biological role, allows the formation of correctly charged Gln-tRNA(Gln) through the transamidation of misacylated Glu-tRNA(Gln) in organisms which lack glutaminyl-tRNA synthetase. The reaction takes place in the presence of glutamine and ATP through an activated gamma-phospho-Glu-tRNA(Gln). This is Glutamyl-tRNA(Gln) amidotransferase subunit A from Lacticaseibacillus paracasei (strain ATCC 334 / BCRC 17002 / CCUG 31169 / CIP 107868 / KCTC 3260 / NRRL B-441) (Lactobacillus paracasei).